The sequence spans 896 residues: Translation initiation factor IF-2 (896 aa).

The segment at leucine 46–arginine 315 is disordered. Residues serine 99–histidine 247 are compositionally biased toward basic and acidic residues. The span at serine 269–arginine 278 shows a compositional bias: basic residues. Over residues lysine 279–arginine 288 the composition is skewed to basic and acidic residues. The tr-type G domain maps to proline 396 to arginine 565. The interval glycine 405–threonine 412 is G1. Glycine 405–threonine 412 provides a ligand contact to GTP. Positions glycine 430–histidine 434 are G2. The segment at aspartate 451 to glycine 454 is G3. Residues aspartate 451–histidine 455 and asparagine 505–aspartate 508 each bind GTP. The G4 stretch occupies residues asparagine 505–aspartate 508. The segment at serine 541 to histidine 543 is G5.

The protein belongs to the TRAFAC class translation factor GTPase superfamily. Classic translation factor GTPase family. IF-2 subfamily.

It is found in the cytoplasm. Functionally, one of the essential components for the initiation of protein synthesis. Protects formylmethionyl-tRNA from spontaneous hydrolysis and promotes its binding to the 30S ribosomal subunits. Also involved in the hydrolysis of GTP during the formation of the 70S ribosomal complex. This chain is Translation initiation factor IF-2, found in Idiomarina loihiensis (strain ATCC BAA-735 / DSM 15497 / L2-TR).